The chain runs to 386 residues: MTHDVLLAGAGLANGLIALALRAARPDLRVLLLDHAAGPSDGHTWSCHDPDLSPDWLARLKPLRRANWPDQEVRFPRHARRLATGYGSLDGAALADAVVRSGAEIRWDSDIALLDAQGATLSCGTRIEAGAVLDGRGAQPSRHLTVGFQKFVGVEIETDRPHGVPRPMIMDATVTQQDGYRFIYLLPFSPTRILIEDTRYSDGGDLDDDALAAASHDYARQQGWTGAEVRRERGILPIALAHDAAGFWADHAAGPVPVGLRAGFFHPVTGYSLPYAAQVADVVAGLSGPPGTDALRGAIRDYAIDRARRDRFLRLLNRMLFRGCAPDRRYTLLQRFYRMPHGLIERFYAGRLSVADQLRIVTGKPPIPLGTAIRCLPERPLLKENA.

NAD(+) is bound at residue 4–34; it reads DVLLAGAGLANGLIALALRAARPDLRVLLLD.

The protein belongs to the lycopene cyclase family. FAD is required as a cofactor.

The enzyme catalyses a carotenoid psi-end group = a carotenoid beta-end derivative. The catalysed reaction is all-trans-lycopene = gamma-carotene. It carries out the reaction gamma-carotene = all-trans-beta-carotene. The protein operates within carotenoid biosynthesis; astaxanthin biosynthesis. Its function is as follows. Catalyzes the double cyclization reaction which converts lycopene to beta-carotene. The chain is Lycopene beta-cyclase from Paracoccus sp. (strain N81106 / MBIC 01143) (Agrobacterium aurantiacum).